The primary structure comprises 1073 residues: MPRRIDVRKVLMLGSGAIKIAEAAEFDYSGSQALKALREEGIETVLVNPNVATIQTSYKLADHVYLGPLQPWFVEKVIERERPDAILLGFGGQTALSLGVELHRRGILSRYGIRVLGTPIEGIEKALSRGKFRETMMKAGLPVPPSTPATSVEEALRAANEIGYPVIVRVSFNLGGGGSLVAWSREELERWLVRAFAFSGTGEVLVEKYLHYWKEIEYEVVRDQYGNMVAVACLENADPMGVHTGESVVIAPCQTLTDQEYQLLREASLRVAEAIGLVGEGNVQLALNPRDSWEYYVIETNPRMSRSSALASKATGYPLAYIAAKLALGYRLDELLNRVTERTCACFEPSLDYVVVKVPRWDLEKFEGVEKSIGSEMKSIGEVMAIGRNFAEALQKAIRMLDIGEPGVVAGPRYEEPESLEEVLGKLRRREPYWPIWAAKAFRLGASVEQVYEATGVDPYFLSQIREIVEVAEKLRRTKPWSSEFLDLLAEAKRLGFSDEQVALLTGTTVEKVEKARRSIGLDRPRVRQIDTLAAEWPAATNYLYMSYNAYEDDEPITTGRPRLIVLGAGVFRIGVSVEFDWGVVSFADEARRLGYEVVIVNYNPETVSTDWDISDKLYFEELTLERVIDIYWFEKPVGVIAFLGGQIANNLAKPLEERGVRLLGTPGRSVDRAENRAWFSQLLEELGIKQPSWTAASSIEEVLKFAESVGYPVLVRPSYVLSGSAMKIAWSPEELKSYIEQAARVSPRYPVVVSKFLEDAVEAEIDAVGDSRRTVGTVIEHVEPGGVHSGDSTMVIPWFSLPETAVREMIRIAETLNEVLEIKGPFNIQFLVKDGSVYVVELNLRASRSMPFTSKVTGYNLMRAAAEAALRGRISYGFNGADGFKLLRPTGWWGVKSPQPSWQRLRGAYPGLGPEMRSTGEVAALGRTLHEALLKSWLSVQGNRIPPAGSIVLIYTPTGRGSSDLSQAAKLMTEKGYTVYTIEGMEVDGAEPLPLEQALRLVRMGGVGLLMTTDYAPQRDYRVRRLAVDLGVPVVLDARLARMLAEAINRVGLENLEALELREYWGPNVEPF.

Residues 1 to 402 (MPRRIDVRKV…ALQKAIRMLD (402 aa)) form a carboxyphosphate synthetic domain region. 12 residues coordinate ATP: Arg-129, Arg-169, Gly-175, Gly-176, Lys-208, Leu-210, Glu-215, Gly-241, Val-242, His-243, Gln-284, and Glu-299. An ATP-grasp 1 domain is found at 133-328 (RETMMKAGLP…LAYIAAKLAL (196 aa)). Positions 284, 299, and 301 each coordinate Mg(2+). Mn(2+)-binding residues include Gln-284, Glu-299, and Asn-301. Residues 403 to 555 (IGEPGVVAGP…MSYNAYEDDE (153 aa)) are oligomerization domain. Residues 556–944 (PITTGRPRLI…LKSWLSVQGN (389 aa)) form a carbamoyl phosphate synthetic domain region. Residues 681–871 (SQLLEELGIK…LMRAAAEAAL (191 aa)) form the ATP-grasp 2 domain. Residues Arg-717, Lys-756, Leu-758, Glu-763, Gly-787, Val-788, His-789, Ser-790, Gln-830, and Glu-842 each contribute to the ATP site. Residues Gln-830, Glu-842, and Asn-844 each contribute to the Mg(2+) site. Mn(2+) is bound by residues Gln-830, Glu-842, and Asn-844. In terms of domain architecture, MGS-like spans 944–1073 (NRIPPAGSIV…EYWGPNVEPF (130 aa)). An allosteric domain region spans residues 945-1073 (RIPPAGSIVL…EYWGPNVEPF (129 aa)).

Belongs to the CarB family. Composed of two chains; the small (or glutamine) chain promotes the hydrolysis of glutamine to ammonia, which is used by the large (or ammonia) chain to synthesize carbamoyl phosphate. Tetramer of heterodimers (alpha,beta)4. Mg(2+) is required as a cofactor. It depends on Mn(2+) as a cofactor.

It carries out the reaction hydrogencarbonate + L-glutamine + 2 ATP + H2O = carbamoyl phosphate + L-glutamate + 2 ADP + phosphate + 2 H(+). It catalyses the reaction hydrogencarbonate + NH4(+) + 2 ATP = carbamoyl phosphate + 2 ADP + phosphate + 2 H(+). It functions in the pathway amino-acid biosynthesis; L-arginine biosynthesis; carbamoyl phosphate from bicarbonate: step 1/1. Its pathway is pyrimidine metabolism; UMP biosynthesis via de novo pathway; (S)-dihydroorotate from bicarbonate: step 1/3. In terms of biological role, large subunit of the glutamine-dependent carbamoyl phosphate synthetase (CPSase). CPSase catalyzes the formation of carbamoyl phosphate from the ammonia moiety of glutamine, carbonate, and phosphate donated by ATP, constituting the first step of 2 biosynthetic pathways, one leading to arginine and/or urea and the other to pyrimidine nucleotides. The large subunit (synthetase) binds the substrates ammonia (free or transferred from glutamine from the small subunit), hydrogencarbonate and ATP and carries out an ATP-coupled ligase reaction, activating hydrogencarbonate by forming carboxy phosphate which reacts with ammonia to form carbamoyl phosphate. The polypeptide is Carbamoyl phosphate synthase large chain (Hyperthermus butylicus (strain DSM 5456 / JCM 9403 / PLM1-5)).